A 216-amino-acid polypeptide reads, in one-letter code: Guanylate kinase (216 aa).

In terms of domain architecture, Guanylate kinase-like spans 11–189 (GVLIVISGPS…AVKKIEAILL (179 aa)). An ATP-binding site is contributed by 18–25 (GPSGAGKG).

This sequence belongs to the guanylate kinase family.

The protein resides in the cytoplasm. It carries out the reaction GMP + ATP = GDP + ADP. In terms of biological role, essential for recycling GMP and indirectly, cGMP. The protein is Guanylate kinase of Clostridium perfringens (strain SM101 / Type A).